A 165-amino-acid polypeptide reads, in one-letter code: Protein C2-DOMAIN ABA-RELATED 8 (165 aa).

Residue M1 is modified to N-acetylmethionine. A C2 domain is found at 1 to 106; sequence MENLVGLLRI…QGTDIQELTN (106 aa). Ca(2+) is bound by residues R21, D22, D27, D73, K74, D75, and D81.

The protein belongs to the plant CAR protein family. As to quaternary structure, binds to PYR/PYL/RCAR abscisic acid intracellular receptors in an ABA-independent manner, both at the plasma membrane and in the nucleus.

The protein resides in the cell membrane. The protein localises to the nucleus. Its function is as follows. Stimulates the GTPase/ATPase activities of Obg-like ATPases. Mediates the transient calcium-dependent interaction of PYR/PYL/RCAR abscisic acid (ABA) receptors with the plasma membrane and thus regulates ABA sensitivity. In Arabidopsis thaliana (Mouse-ear cress), this protein is Protein C2-DOMAIN ABA-RELATED 8.